A 638-amino-acid polypeptide reads, in one-letter code: Probable lysine-specific demethylase 4F (638 aa).

Residues 15–57 enclose the JmjN domain; sequence IMTFYPTMEEFADFNTYVAYMESQGAHRAGLAKVIPPKEWKAR. Tyrosine 133 contacts 2-oxoglutarate. Positions 143 to 309 constitute a JmjC domain; the sequence is EESTKQWNLG…YGKVASQCSC (167 aa). Fe cation-binding residues include histidine 189 and glutamate 191. 2-oxoglutarate is bound by residues asparagine 199 and lysine 207. Residues cysteine 235 and histidine 241 each coordinate Zn(2+). Residue lysine 242 coordinates 2-oxoglutarate. Position 277 (histidine 277) interacts with Fe cation. The Zn(2+) site is built by cysteine 307 and cysteine 309. Residues 426–474 form a disordered region; sequence PCRGCGRGRGRGRGRGRRPRELGTEETTVQSAAKRRLSVGTGSRAPGRK. A compositionally biased stretch (basic residues) spans 431–443; the sequence is GRGRGRGRGRGRR.

It belongs to the JHDM3 histone demethylase family. Fe(2+) is required as a cofactor.

It localises to the nucleus. The enzyme catalyses N(6),N(6),N(6)-trimethyl-L-lysyl(9)-[histone H3] + 2 2-oxoglutarate + 2 O2 = N(6)-methyl-L-lysyl(9)-[histone H3] + 2 formaldehyde + 2 succinate + 2 CO2. Probable histone demethylase that specifically demethylates 'Lys-9' of histone H3, thereby playing a central role in histone code. The polypeptide is Probable lysine-specific demethylase 4F (Homo sapiens (Human)).